A 569-amino-acid polypeptide reads, in one-letter code: Aspartate--tRNA ligase, cytoplasmic 2 (569 aa).

A disordered region spans residues 1–23 (MSEENNHKEKSKNEIKKEKKKIE). An aspartate region spans residues 292–295 (QFYR). R314 contacts L-aspartate. ATP-binding positions include 314–316 (RTD) and 322–324 (RHL). Residues S475 and R479 each coordinate L-aspartate. Position 540 to 543 (540 to 543 (GLER)) interacts with ATP.

It belongs to the class-II aminoacyl-tRNA synthetase family. Type 2 subfamily.

Its subcellular location is the cytoplasm. It catalyses the reaction tRNA(Asp) + L-aspartate + ATP = L-aspartyl-tRNA(Asp) + AMP + diphosphate. In Dictyostelium discoideum (Social amoeba), this protein is Aspartate--tRNA ligase, cytoplasmic 2 (aspS2).